Consider the following 475-residue polypeptide: MATAEAQIGVNRNLQKQDLSNLDVSKLTPLSPEVISRQATINIGTIGHVAHGKSTVVKAISGVQTVRFKNELERNITIKLGYANAKIYKCDNPKCPRPASFVSDASSKDDSLPCTRLNCSGNFRLVRHVSFVDCPGHDILMATMLNGAAVMDAALLLIAGNESCPQPQTSEHLAAIEIMKLKQILILQNKIDLIKESQAKEQYEEITKFVQGTVAEGAPIIPISAQLKYNIDVLCEYIVNKIPVPPRDFNAPPRLIVIRSFDVNKPGCEVADLKGGVAGGSILSGVLKVGQEIEVRPGVVTKDSDGNITCRPIFSRIVSLFAEQNELQYAVPGGLIGVGTKIDPTLCRADRLVGQVLGAVGQLPDIYQELEISYYLLRRLLGVRTDGDKKGARVEKLQKNEILLVNIGSLSTGGRISATKGDLAKIVLTTPVCTEKGEKIALSRRVENHWRLIGWGQIFGGKTITPVLDSQVAKK.

A tr-type G domain is found at 38–247 (QATINIGTIG…IVNKIPVPPR (210 aa)). The tract at residues 47–54 (GHVAHGKS) is G1. 50–55 (AHGKST) is a binding site for GTP. A G2 region spans residues 75-79 (NITIK). The interval 133–136 (DCPG) is G3. Residues 189–192 (NKID) and 224–226 (SAQ) contribute to the GTP site. Residues 189-192 (NKID) are G4. Residues 224–226 (SAQ) form a G5 region. The segment at 456–468 (GQIFGGKTITPVL) is interacts with CDC123.

The protein belongs to the TRAFAC class translation factor GTPase superfamily. Classic translation factor GTPase family. EIF2G subfamily. Eukaryotic translation initiation factor 2 eIF2 is a heterotrimeric complex composed of an alpha, a beta and a gamma subunit. The factors eIF-1, eIF-2, eIF-3, TIF5/eIF-5 and methionyl-tRNAi form a multifactor complex (MFC) that may bind to the 40S ribosome.

The protein resides in the cytoplasm. It is found in the cytosol. It catalyses the reaction GTP + H2O = GDP + phosphate + H(+). Functionally, as a subunit of eukaryotic initiation factor 2 eIF2, involved in the early steps of protein synthesis. In the presence of GTP, eIF-2 forms a ternary complex with initiator tRNA Met-tRNAi and then recruits the 40S ribosomal complex and initiation factors eIF-1, eIF-1A and eIF-3 to form the 43S pre-initiation complex (43S PIC), a step that determines the rate of protein translation. The 43S PIC binds to mRNA and scans downstream to the initiation codon, where it forms a 48S initiation complex by codon-anticodon base pairing. This leads to the displacement of eIF-1 to allow GTPase-activating protein (GAP) eIF-5-mediated hydrolysis of eIF2-bound GTP. Hydrolysis of GTP and release of Pi, which makes GTP hydrolysis irreversible, causes the release of the eIF-2-GDP binary complex from the 40S subunit, an event that is essential for the subsequent joining of the 60S ribosomal subunit to form an elongation-competent 80S ribosome. In order for eIF-2 to recycle and catalyze another round of initiation, the GDP bound to eIF-2 must be exchanged with GTP by way of a reaction catalyzed by GDP-GTP exchange factor (GEF) eIF-2B. This is Eukaryotic translation initiation factor 2 subunit 3 from Drosophila melanogaster (Fruit fly).